The following is a 121-amino-acid chain: MEAKAIARHIRVTPMKARRVVNLVRGKQANEALAILKFAPQAASEPVFKVVQSAISNARVLADRDGVAFDEGDLIISEAFVDEGPTMKRFQPRAQGRAFQIKKRTSHITVVVATPEKEEAR.

It belongs to the universal ribosomal protein uL22 family. In terms of assembly, part of the 50S ribosomal subunit.

Functionally, this protein binds specifically to 23S rRNA; its binding is stimulated by other ribosomal proteins, e.g. L4, L17, and L20. It is important during the early stages of 50S assembly. It makes multiple contacts with different domains of the 23S rRNA in the assembled 50S subunit and ribosome. In terms of biological role, the globular domain of the protein is located near the polypeptide exit tunnel on the outside of the subunit, while an extended beta-hairpin is found that lines the wall of the exit tunnel in the center of the 70S ribosome. The chain is Large ribosomal subunit protein uL22 from Arthrobacter sp. (strain FB24).